A 346-amino-acid polypeptide reads, in one-letter code: Selenide, water dikinase (346 aa).

The active site involves Sec17. Sec17 is a non-standard amino acid (selenocysteine). ATP contacts are provided by residues Lys20 and 47–49 (TSD). Asp50 serves as a coordination point for Mg(2+). Residues Asp67, Asp90, and 138-140 (GHT) each bind ATP. A Mg(2+)-binding site is contributed by Asp90. Residue Asp226 participates in Mg(2+) binding.

The protein belongs to the selenophosphate synthase 1 family. Class I subfamily. Homodimer. It depends on Mg(2+) as a cofactor.

It carries out the reaction hydrogenselenide + ATP + H2O = selenophosphate + AMP + phosphate + 2 H(+). Synthesizes selenophosphate from selenide and ATP. The sequence is that of Selenide, water dikinase from Trichlorobacter lovleyi (strain ATCC BAA-1151 / DSM 17278 / SZ) (Geobacter lovleyi).